Consider the following 417-residue polypeptide: Multifunctional CCA protein (417 aa).

Residues G8 and R11 each contribute to the ATP site. 2 residues coordinate CTP: G8 and R11. 2 residues coordinate Mg(2+): D21 and D23. Residues R91, R137, and R140 each contribute to the ATP site. The CTP site is built by R91, R137, and R140. The region spanning 225–326 (SGIHTLMTLQ…LNVLKKTDAF (102 aa)) is the HD domain.

This sequence belongs to the tRNA nucleotidyltransferase/poly(A) polymerase family. Bacterial CCA-adding enzyme type 1 subfamily. As to quaternary structure, monomer. Can also form homodimers and oligomers. Requires Mg(2+) as cofactor. Ni(2+) serves as cofactor.

The enzyme catalyses a tRNA precursor + 2 CTP + ATP = a tRNA with a 3' CCA end + 3 diphosphate. It catalyses the reaction a tRNA with a 3' CCA end + 2 CTP + ATP = a tRNA with a 3' CCACCA end + 3 diphosphate. Catalyzes the addition and repair of the essential 3'-terminal CCA sequence in tRNAs without using a nucleic acid template. Adds these three nucleotides in the order of C, C, and A to the tRNA nucleotide-73, using CTP and ATP as substrates and producing inorganic pyrophosphate. tRNA 3'-terminal CCA addition is required both for tRNA processing and repair. Also involved in tRNA surveillance by mediating tandem CCA addition to generate a CCACCA at the 3' terminus of unstable tRNAs. While stable tRNAs receive only 3'-terminal CCA, unstable tRNAs are marked with CCACCA and rapidly degraded. The sequence is that of Multifunctional CCA protein from Neisseria meningitidis serogroup A / serotype 4A (strain DSM 15465 / Z2491).